Consider the following 417-residue polypeptide: Imidazolonepropionase (417 aa).

Positions 77 and 79 each coordinate Fe(3+). Positions 77 and 79 each coordinate Zn(2+). Arg-86, Tyr-149, and His-182 together coordinate 4-imidazolone-5-propanoate. Tyr-149 is a binding site for N-formimidoyl-L-glutamate. Position 247 (His-247) interacts with Fe(3+). Residue His-247 participates in Zn(2+) binding. Position 250 (Gln-250) interacts with 4-imidazolone-5-propanoate. Residue Asp-322 participates in Fe(3+) binding. Asp-322 is a Zn(2+) binding site. N-formimidoyl-L-glutamate is bound by residues Asn-324 and Gly-326. Thr-327 contributes to the 4-imidazolone-5-propanoate binding site.

Belongs to the metallo-dependent hydrolases superfamily. HutI family. Zn(2+) is required as a cofactor. The cofactor is Fe(3+).

Its subcellular location is the cytoplasm. The enzyme catalyses 4-imidazolone-5-propanoate + H2O = N-formimidoyl-L-glutamate. Its pathway is amino-acid degradation; L-histidine degradation into L-glutamate; N-formimidoyl-L-glutamate from L-histidine: step 3/3. Catalyzes the hydrolytic cleavage of the carbon-nitrogen bond in imidazolone-5-propanoate to yield N-formimidoyl-L-glutamate. It is the third step in the universal histidine degradation pathway. The sequence is that of Imidazolonepropionase from Cupriavidus taiwanensis (strain DSM 17343 / BCRC 17206 / CCUG 44338 / CIP 107171 / LMG 19424 / R1) (Ralstonia taiwanensis (strain LMG 19424)).